A 345-amino-acid polypeptide reads, in one-letter code: NADH-quinone oxidoreductase subunit H (345 aa).

Helical transmembrane passes span 13-33 (VIIL…LLFL), 84-104 (FILA…VIPF), 115-135 (VAIL…IMGG), 161-181 (IGLI…GDIV), 190-210 (LFNW…ISCL), 248-268 (YIAI…GWLS), 277-297 (PLWM…VKAI), and 309-329 (LGWK…AFAA).

The protein belongs to the complex I subunit 1 family. NDH-1 is composed of 14 different subunits. Subunits NuoA, H, J, K, L, M, N constitute the membrane sector of the complex.

The protein localises to the cell inner membrane. The enzyme catalyses a quinone + NADH + 5 H(+)(in) = a quinol + NAD(+) + 4 H(+)(out). NDH-1 shuttles electrons from NADH, via FMN and iron-sulfur (Fe-S) centers, to quinones in the respiratory chain. The immediate electron acceptor for the enzyme in this species is believed to be ubiquinone. Couples the redox reaction to proton translocation (for every two electrons transferred, four hydrogen ions are translocated across the cytoplasmic membrane), and thus conserves the redox energy in a proton gradient. This subunit may bind ubiquinone. In Ruegeria sp. (strain TM1040) (Silicibacter sp.), this protein is NADH-quinone oxidoreductase subunit H.